The sequence spans 1253 residues: Cytoplasmic FMR1-interacting protein 1 (1253 aa).

Ser583 bears the Phosphoserine mark. The tract at residues 724-732 (DKRLRSECK) is EIF4E-binding. Thr1234 is modified (phosphothreonine).

It belongs to the CYFIP family. As to quaternary structure, component of the WAVE1 complex composed of ABI2, CYFIP1 or CYFIP2, BRK1, NCKAP1 and WASF1/WAVE1. Within the complex, a heterodimer containing NCKAP1 and CYFIP1 interacts with a heterotrimer formed by WAVE1, ABI2 and BRK1. Component of the CYFIP1-EIF4E-FMR1 complex which is composed of CYFIP, EIF4E and FMR1. Interacts with FMR1 but does not bind to related proteins FXR1 or FXR2. Interaction with EIF4E stimulates FMR1 binding. Component of the WAVE2 complex composed of ABI1, CYFIP1/SRA1, NCKAP1/NAP1 (NCKAP1L/HEM1 in hematopoietic cells) and WASF2/WAVE2. Interacts with the active GTP-bound form of RAC1. Interacts through its C-terminus with the C-terminus of DPYSL2/CRMP2 which is necessary for DPYSL2-induced axon outgrowth. Interacts with NYAP1, NYAP2 and MYO16. Interacts with TMEM108 (via N-terminus); the interaction associates TMEM108 with the WAVE1 complex. Highly expressed in embryonic and adult developing nervous system.

The protein localises to the cytoplasm. It is found in the perinuclear region. It localises to the cell projection. Its subcellular location is the lamellipodium. The protein resides in the ruffle. The protein localises to the synapse. It is found in the synaptosome. Its function is as follows. Component of the CYFIP1-EIF4E-FMR1 complex which binds to the mRNA cap and mediates translational repression. In the CYFIP1-EIF4E-FMR1 complex this subunit is an adapter between EIF4E and FMR1. Promotes the translation repression activity of FMR1 in brain probably by mediating its association with EIF4E and mRNA. Regulates formation of membrane ruffles and lamellipodia. Plays a role in axon outgrowth. Binds to F-actin but not to RNA. Part of the WAVE complex that regulates actin filament reorganization via its interaction with the Arp2/3 complex. Actin remodeling activity is regulated by RAC1. Regulator of epithelial morphogenesis. May act as an invasion suppressor in cancers. As component of the WAVE1 complex, required for BDNF-NTRK2 endocytic trafficking and signaling from early endosomes. The chain is Cytoplasmic FMR1-interacting protein 1 from Mus musculus (Mouse).